A 129-amino-acid polypeptide reads, in one-letter code: Large-conductance mechanosensitive channel (129 aa).

3 consecutive transmembrane segments (helical) span residues 8-28 (FAFR…AAFS), 30-50 (IIKS…IGGI), and 67-87 (GQFL…FLFV).

Belongs to the MscL family. In terms of assembly, homopentamer.

It localises to the cell membrane. In terms of biological role, channel that opens in response to stretch forces in the membrane lipid bilayer. May participate in the regulation of osmotic pressure changes within the cell. This Exiguobacterium sibiricum (strain DSM 17290 / CCUG 55495 / CIP 109462 / JCM 13490 / 255-15) protein is Large-conductance mechanosensitive channel.